A 186-amino-acid chain; its full sequence is Dynactin subunit 3 (186 aa).

Ala-2 is subject to N-acetylalanine. Residues 46 to 66 (NIASKRERVKILYKKIEDLIK) adopt a coiled-coil conformation.

The protein belongs to the dynactin subunit 3 family. As to quaternary structure, subunit of dynactin, a multiprotein complex part of a tripartite complex with dynein and a adapter, such as BICDL1, BICD2 or HOOK3. The dynactin complex is built around ACTR1A/ACTB filament and consists of an actin-related filament composed of a shoulder domain, a pointed end and a barbed end. Its length is defined by its flexible shoulder domain. The soulder is composed of 2 DCTN1 subunits, 4 DCTN2 and 2 DCTN3. The 4 DCNT2 (via N-terminus) bind the ACTR1A filament and act as molecular rulers to determine the length. The pointed end is important for binding dynein-dynactin cargo adapters. Consists of 4 subunits: ACTR10, DCNT4, DCTN5 and DCTN6. The barbed end is composed of a CAPZA1:CAPZB heterodimers, which binds ACTR1A/ACTB filament and dynactin and stabilizes dynactin.

The protein resides in the cytoplasm. The protein localises to the cytoskeleton. Its subcellular location is the microtubule organizing center. It is found in the centrosome. It localises to the chromosome. The protein resides in the centromere. The protein localises to the kinetochore. Its subcellular location is the spindle. It is found in the cleavage furrow. It localises to the midbody. Functionally, part of the dynactin complex that activates the molecular motor dynein for ultra-processive transport along microtubules. Together with dynein may be involved in spindle assembly and cytokinesis. The polypeptide is Dynactin subunit 3 (Mus musculus (Mouse)).